A 281-amino-acid polypeptide reads, in one-letter code: 2-dehydro-3-deoxyphosphooctonate aldolase (281 aa).

This sequence belongs to the KdsA family.

The protein localises to the cytoplasm. It catalyses the reaction D-arabinose 5-phosphate + phosphoenolpyruvate + H2O = 3-deoxy-alpha-D-manno-2-octulosonate-8-phosphate + phosphate. It functions in the pathway carbohydrate biosynthesis; 3-deoxy-D-manno-octulosonate biosynthesis; 3-deoxy-D-manno-octulosonate from D-ribulose 5-phosphate: step 2/3. The protein operates within bacterial outer membrane biogenesis; lipopolysaccharide biosynthesis. This is 2-dehydro-3-deoxyphosphooctonate aldolase from Pseudomonas savastanoi pv. phaseolicola (strain 1448A / Race 6) (Pseudomonas syringae pv. phaseolicola (strain 1448A / Race 6)).